Here is a 168-residue protein sequence, read N- to C-terminus: Photosystem I assembly protein Ycf3 (168 aa).

TPR repeat units lie at residues 35-68 (AFTY…EIDP), 72-105 (SYIL…NPFL), and 120-153 (GEQA…TPGN).

It belongs to the Ycf3 family.

It is found in the plastid. Its subcellular location is the chloroplast thylakoid membrane. In terms of biological role, essential for the assembly of the photosystem I (PSI) complex. May act as a chaperone-like factor to guide the assembly of the PSI subunits. This is Photosystem I assembly protein Ycf3 from Piper cenocladum (Ant piper).